The primary structure comprises 734 residues: Subtilisin-like protease (734 aa).

The signal sequence occupies residues 1 to 20; sequence MTCICIFSIAFLLSFHLTTA. Residues 28-109 enclose the Inhibitor I9 domain; the sequence is TYIVHVDKPD…AKLEKVLTLH (82 aa). The Peptidase S8 domain maps to 114-591; sequence PNFLGLYQNM…AGHVNPSKAS (478 aa). Aspartate 141 serves as the catalytic Charge relay system. N-linked (GlcNAc...) asparagine glycosylation is present at asparagine 172. The active-site Charge relay system is histidine 199. 2 N-linked (GlcNAc...) asparagine glycosylation sites follow: asparagine 222 and asparagine 306. Positions 357-442 constitute a PA domain; that stretch reads PLVYPGTSDE…THVGYAAGEM (86 aa). Asparagine 448 and asparagine 509 each carry an N-linked (GlcNAc...) asparagine glycan. The Charge relay system role is filled by serine 524. An N-linked (GlcNAc...) asparagine glycan is attached at asparagine 652.

Belongs to the peptidase S8 family.

The protein localises to the secreted. The protein resides in the extracellular space. It is found in the apoplast. Functionally, required for arbuscular mycorrhiza (AM) development during AM symbiosis with AM fungi (e.g. Glomeromycota intraradices). The sequence is that of Subtilisin-like protease from Petunia hybrida (Petunia).